A 504-amino-acid polypeptide reads, in one-letter code: Fumitremorgin C monooxygenase (504 aa).

The chain crosses the membrane as a helical span at residues 9-29; the sequence is LPYPGVVGASLLVILGIILLF. Cysteine 442 is a heme binding site.

The protein belongs to the cytochrome P450 family. The cofactor is heme.

The protein localises to the membrane. It catalyses the reaction fumitremorgin C + 2 reduced [NADPH--hemoprotein reductase] + 2 O2 = 12alpha,13alpha-dihydroxyfumitremorgin C + 2 oxidized [NADPH--hemoprotein reductase] + 2 H2O + 2 H(+). Its pathway is mycotoxin biosynthesis. Cytochrome P450 monooxygenase; part of the gene cluster that mediates the biosynthesis of fumitremorgins, indole alkaloids that carry not only intriguing chemical structures, but also interesting biological and pharmacological activities. The biosynthesis of fumitremorgin-type alkaloids begins by condensation of the two amino acids L-tryptophan and L-proline to brevianamide F, catalyzed by the non-ribosomal peptide synthetase ftmPS/ftmA. Brevianamide F is then prenylated by the prenyltransferase ftmPT1/ftmB in the presence of dimethylallyl diphosphate, resulting in the formation of tryprostatin B. The three cytochrome P450 monooxygenases, ftmP450-1/ftmC, ftmP450-2/ftmE and ftmP450-3/FtmG, are responsible for the conversion of tryprostatin B to 6-hydroxytryprostatin B, tryprostatin A to fumitremorgin C and fumitremorgin C to 12,13-dihydroxyfumitremorgin C, respectively. The putative methyltransferase ftmMT/ftmD is expected for the conversion of 6-hydroxytryprostatin B to tryprostatin A. FtmPT2/FtmH catalyzes the prenylation of 12,13-dihydroxyfumitre-morgin C in the presence of dimethylallyl diphosphate, resulting in the formation of fumitremorgin B. Fumitremorgin B is further converted to verruculogen by ftmOx1/ftmF via the insertion of an endoperoxide bond between the two prenyl moieties. Finally, verruculogen is further converted to fumitremorgin A by the verruculogen prenyltransferase ftmPT3. This chain is Fumitremorgin C monooxygenase, found in Neosartorya fischeri (strain ATCC 1020 / DSM 3700 / CBS 544.65 / FGSC A1164 / JCM 1740 / NRRL 181 / WB 181) (Aspergillus fischerianus).